The sequence spans 27 residues: Dermaseptin-like peptide (27 aa).

Functionally, has antimicrobial activity against the Gram-positive bacterium M.luteus and the yeast C.albicans. Has hemolytic activity on human and duck erythrocytes. This is Dermaseptin-like peptide from Schistosoma mansoni (Blood fluke).